Reading from the N-terminus, the 257-residue chain is MIHSRKLRLWLYLVLLAVFIGACGMKKEESSKDKQIKENFNKTLSLYPTKNLEDFYDKEGFRDEEFEKGDKGTWIIHSKMTIETNGKNMESRGLVLYVDRNTRTTKGEFIVRELWEDKKGYSRSKEKEYPVKMEHNKIIPTKPIADDKLRKEIEDFKFFVQYGDFKDINDYKDGDISYNPNVPSYSAKYQLSNNDYNVKQLRKRYDIPTKKAPKLLLKGDGDLKGSSIGHKNLEFIFIENKEENIYFTDSINFKPTE.

An N-terminal signal peptide occupies residues 1–22 (MIHSRKLRLWLYLVLLAVFIGA). A lipid anchor (N-palmitoyl cysteine) is attached at C23. A lipid anchor (S-diacylglycerol cysteine) is attached at C23.

Belongs to the staphylococcal tandem lipoprotein family.

It localises to the cell membrane. This is an uncharacterized protein from Staphylococcus aureus (strain Mu50 / ATCC 700699).